We begin with the raw amino-acid sequence, 300 residues long: NADH-cytochrome b5 reductase 1 (300 aa).

Residues 8-28 form a helical membrane-spanning segment; that stretch reads PLVVFATVATIIISFVTLYFF. Positions 34-45 are enriched in low complexity; that stretch reads SSTTSSSSSSSS. Positions 34-54 are disordered; the sequence is SSTTSSSSSSSSKSKKGSPAL. The FAD-binding FR-type domain occupies 57–160; sequence DKFQKFPLIS…RGPKGFFTYT (104 aa). FAD contacts are provided by residues 140 to 155 and 166 to 198; these read AEKQ…GPKG and SLGL…KVHL.

It belongs to the flavoprotein pyridine nucleotide cytochrome reductase family. As to quaternary structure, monomer. Component of the 2-(3-amino-3-carboxypropyl)histidine synthase complex composed of DPH1, DPH2, DPH3 and a NADH-dependent reductase, predominantly CBR1. It depends on FAD as a cofactor.

Its subcellular location is the mitochondrion outer membrane. It carries out the reaction 2 Fe(III)-[cytochrome b5] + NADH = 2 Fe(II)-[cytochrome b5] + NAD(+) + H(+). The catalysed reaction is 2 Fe(3+)-[Dph3] + NADH = 2 Fe(2+)-[Dph3] + NAD(+) + H(+). It functions in the pathway protein modification; peptidyl-diphthamide biosynthesis. In terms of biological role, NADH-dependent reductase for DPH3 and cytochrome b5. Required for the first step of diphthamide biosynthesis, a post-translational modification of histidine which occurs in elongation factor 2. DPH1 and DPH2 transfer a 3-amino-3-carboxypropyl (ACP) group from S-adenosyl-L-methionine (SAM) to a histidine residue, the reaction is assisted by a reduction system comprising DPH3 and a NADH-dependent reductase, predominantly CBR1. By reducing DPH3, also involved in the formation of the tRNA wobble base modification mcm5s 2U (5-methoxycarbonylmethyl-2-thiouridine), mediated by the elongator complex. The cytochrome b5/NADH cytochrome b5 reductase electron transfer system supports the catalytic activity of several sterol biosynthetic enzymes. The protein is NADH-cytochrome b5 reductase 1 (CBR1) of Lodderomyces elongisporus (strain ATCC 11503 / CBS 2605 / JCM 1781 / NBRC 1676 / NRRL YB-4239) (Yeast).